The chain runs to 103 residues: Pyrimidine/purine nucleoside phosphorylase (103 aa).

The protein belongs to the nucleoside phosphorylase PpnP family.

The enzyme catalyses a purine D-ribonucleoside + phosphate = a purine nucleobase + alpha-D-ribose 1-phosphate. It catalyses the reaction adenosine + phosphate = alpha-D-ribose 1-phosphate + adenine. It carries out the reaction cytidine + phosphate = cytosine + alpha-D-ribose 1-phosphate. The catalysed reaction is guanosine + phosphate = alpha-D-ribose 1-phosphate + guanine. The enzyme catalyses inosine + phosphate = alpha-D-ribose 1-phosphate + hypoxanthine. It catalyses the reaction thymidine + phosphate = 2-deoxy-alpha-D-ribose 1-phosphate + thymine. It carries out the reaction uridine + phosphate = alpha-D-ribose 1-phosphate + uracil. The catalysed reaction is xanthosine + phosphate = alpha-D-ribose 1-phosphate + xanthine. Catalyzes the phosphorolysis of diverse nucleosides, yielding D-ribose 1-phosphate and the respective free bases. Can use uridine, adenosine, guanosine, cytidine, thymidine, inosine and xanthosine as substrates. Also catalyzes the reverse reactions. This is Pyrimidine/purine nucleoside phosphorylase from Shewanella denitrificans (strain OS217 / ATCC BAA-1090 / DSM 15013).